The chain runs to 351 residues: UDP-3-O-acylglucosamine N-acyltransferase (351 aa).

The active-site Proton acceptor is His257.

Belongs to the transferase hexapeptide repeat family. LpxD subfamily. Homotrimer.

The enzyme catalyses a UDP-3-O-[(3R)-3-hydroxyacyl]-alpha-D-glucosamine + a (3R)-hydroxyacyl-[ACP] = a UDP-2-N,3-O-bis[(3R)-3-hydroxyacyl]-alpha-D-glucosamine + holo-[ACP] + H(+). Its pathway is bacterial outer membrane biogenesis; LPS lipid A biosynthesis. In terms of biological role, catalyzes the N-acylation of UDP-3-O-acylglucosamine using 3-hydroxyacyl-ACP as the acyl donor. Is involved in the biosynthesis of lipid A, a phosphorylated glycolipid that anchors the lipopolysaccharide to the outer membrane of the cell. The polypeptide is UDP-3-O-acylglucosamine N-acyltransferase (Methylorubrum extorquens (strain CM4 / NCIMB 13688) (Methylobacterium extorquens)).